Consider the following 307-residue polypeptide: ATP synthase gamma chain (307 aa).

Belongs to the ATPase gamma chain family. As to quaternary structure, F-type ATPases have 2 components, CF(1) - the catalytic core - and CF(0) - the membrane proton channel. CF(1) has five subunits: alpha(3), beta(3), gamma(1), delta(1), epsilon(1). CF(0) has three main subunits: a, b and c.

Its subcellular location is the cell membrane. Functionally, produces ATP from ADP in the presence of a proton gradient across the membrane. The gamma chain is believed to be important in regulating ATPase activity and the flow of protons through the CF(0) complex. In Mycolicibacterium smegmatis (strain ATCC 700084 / mc(2)155) (Mycobacterium smegmatis), this protein is ATP synthase gamma chain.